Consider the following 2364-residue polypeptide: Actin-binding protein F (2364 aa).

The segment covering 138–157 (THQTSPTTETTTTPSSSSSS) has biased composition (low complexity). Disordered stretches follow at residues 138–168 (THQT…STLD), 1087–1111 (QASK…EKRR), 1412–1435 (NNNS…RAPM), and 1929–2088 (KLIS…SEFN). Residues 1092-1111 (NESEVKDEKSMRNRQVEKRR) show a composition bias toward basic and acidic residues. Low complexity-rich tracts occupy residues 1412–1428 (NNNS…NSFG) and 1932–1960 (SSST…TTTD). Residues 1960 to 2017 (DSSKDKKKLEKEEKQREKERKQKEKEDKKREKEELKKKEKEEKKKKEEEKKLKKKSGS) adopt a coiled-coil conformation. A compositionally biased stretch (basic and acidic residues) spans 1961–2010 (SSKDKKKLEKEEKQREKERKQKEKEDKKREKEELKKKEKEEKKKKEEEKK). Low complexity predominate over residues 2027–2047 (ATPTTTTTTEATTTTTTTTAT). The span at 2052–2070 (IKPEKIASDDEHDDHHHDE) shows a compositional bias: basic and acidic residues. Residues 2071–2081 (HDEEDDDDEPL) show a composition bias toward acidic residues. A coiled-coil region spans residues 2129-2173 (VQRWNSLFKDLRNKVDQVSNKDSVEIDYEKEIDRERRQNKMASNE).

Interacts with actin.

The protein localises to the nucleus. It localises to the cytoplasm. Its subcellular location is the cytoskeleton. The chain is Actin-binding protein F (abpF) from Dictyostelium discoideum (Social amoeba).